The primary structure comprises 136 residues: ATP synthase epsilon chain (136 aa).

It belongs to the ATPase epsilon chain family. F-type ATPases have 2 components, CF(1) - the catalytic core - and CF(0) - the membrane proton channel. CF(1) has five subunits: alpha(3), beta(3), gamma(1), delta(1), epsilon(1). CF(0) has three main subunits: a, b and c.

Its subcellular location is the cell inner membrane. Produces ATP from ADP in the presence of a proton gradient across the membrane. This is ATP synthase epsilon chain from Myxococcus xanthus (strain DK1622).